Consider the following 606-residue polypeptide: Transmembrane 9 superfamily member 1 (606 aa).

The N-terminal stretch at 1 to 27 (MTVLGYPRSWSCHCLPVLILLLGIGHG) is a signal peptide. Asparagine 178 carries an N-linked (GlcNAc...) asparagine glycan. Helical transmembrane passes span 237–257 (LSII…AVIL), 310–330 (VLGV…MALL), 339–359 (GAIN…SGYV), and 373–393 (VWNI…TWSV). The N-linked (GlcNAc...) asparagine glycan is linked to asparagine 401. 4 helical membrane-spanning segments follow: residues 412–432 (ILLL…IGGI), 469–489 (VGGF…FATV), 499–519 (GILF…SIAL), and 535–555 (SVLS…FYYA). A glycan (N-linked (GlcNAc...) asparagine) is linked at asparagine 559. The chain crosses the membrane as a helical span at residues 570 to 590 (FGYSLLTGYVFFLMLGTISFF).

The protein belongs to the nonaspanin (TM9SF) (TC 9.A.2) family.

The protein resides in the lysosome membrane. The protein localises to the cytoplasmic vesicle. Its subcellular location is the autophagosome membrane. Functionally, plays an essential role in autophagy. This Mus musculus (Mouse) protein is Transmembrane 9 superfamily member 1 (Tm9sf1).